We begin with the raw amino-acid sequence, 589 residues long: CTP synthase (589 aa).

The segment at 1–281 (MPQSRTHSRT…DAYVVRQLGL (281 aa)) is amidoligase domain. Ser23 contacts CTP. Ser23 serves as a coordination point for UTP. ATP is bound by residues 24–29 (SLGKGL) and Asp81. Mg(2+) is bound by residues Asp81 and Glu155. CTP-binding positions include 162-164 (DIE), 202-207 (KTKPTQ), and Lys238. UTP contacts are provided by residues 202-207 (KTKPTQ) and Lys238. Residues 306–554 (RIALVGKYVD…VDAALRHKLE (249 aa)) enclose the Glutamine amidotransferase type-1 domain. Gly369 is an L-glutamine binding site. The Nucleophile; for glutamine hydrolysis role is filled by Cys396. Residues 397-400 (LGLQ), Glu419, and Arg480 contribute to the L-glutamine site. Catalysis depends on residues His527 and Glu529. Residues 562 to 589 (HGEERAAADDEIAESADRDEVASVDSAG) are disordered.

Belongs to the CTP synthase family. Homotetramer.

It carries out the reaction UTP + L-glutamine + ATP + H2O = CTP + L-glutamate + ADP + phosphate + 2 H(+). The catalysed reaction is L-glutamine + H2O = L-glutamate + NH4(+). The enzyme catalyses UTP + NH4(+) + ATP = CTP + ADP + phosphate + 2 H(+). It functions in the pathway pyrimidine metabolism; CTP biosynthesis via de novo pathway; CTP from UDP: step 2/2. Allosterically activated by GTP, when glutamine is the substrate; GTP has no effect on the reaction when ammonia is the substrate. The allosteric effector GTP functions by stabilizing the protein conformation that binds the tetrahedral intermediate(s) formed during glutamine hydrolysis. Inhibited by the product CTP, via allosteric rather than competitive inhibition. Its function is as follows. Catalyzes the ATP-dependent amination of UTP to CTP with either L-glutamine or ammonia as the source of nitrogen. Regulates intracellular CTP levels through interactions with the four ribonucleotide triphosphates. The polypeptide is CTP synthase (Rhodococcus opacus (strain B4)).